Here is a 263-residue protein sequence, read N- to C-terminus: N-acyl homoserine lactonase AttM (263 aa).

7 residues coordinate Zn(2+): His103, His105, Asp107, His108, His180, Asp202, and His247.

This sequence belongs to the metallo-beta-lactamase superfamily. Requires Zn(2+) as cofactor.

It carries out the reaction an N-acyl-L-homoserine lactone + H2O = an N-acyl-L-homoserine + H(+). In Azorhizobium caulinodans (strain ATCC 43989 / DSM 5975 / JCM 20966 / LMG 6465 / NBRC 14845 / NCIMB 13405 / ORS 571), this protein is N-acyl homoserine lactonase AttM.